The sequence spans 301 residues: Probable alpha-L-glutamate ligase 1 (301 aa).

The 184-residue stretch at 104 to 287 (LQLLSRKGIG…VTEPIVEYIE (184 aa)) folds into the ATP-grasp domain. ATP-binding positions include Lys141, 178-179 (EY), Asp187, and 211-213 (RSN). Asp248, Glu260, and Asn262 together coordinate Mg(2+). Residues Asp248, Glu260, and Asn262 each coordinate Mn(2+).

This sequence belongs to the RimK family. It depends on Mg(2+) as a cofactor. Mn(2+) is required as a cofactor.

The sequence is that of Probable alpha-L-glutamate ligase 1 from Shewanella sp. (strain MR-4).